A 401-amino-acid chain; its full sequence is MDSSAVPANASNCTDDALAYSSCSPAPSPGSWVNLSHLDGNLSDPCGPNRTDLGGRDSLCPPTGSPSMITAITIMALYSIVCVVGLFGNFLVMYVIVRYTKMKTATNIYIFNLALADALATSTLPFQSVNYLMGTWPFGTILCKIVISIDYYNMFTSIFTLCTMSVDRYIAVCHPVKALDFRTPRNAKIINVCNWILSSAIGLPVMFMATTKYRHGSIDCTLTFSHPTWYWENLLKICVFIFAFIMPVLIITVCYGLMILRLKSVRMLSGSKEKDRNLRRITRMVLVVVAVFIVCWTPIHIYVIIKALVTIPETTFQTVSWHFCIALGYTNSCLNPVLYAFLDENFKRCFREFCIPTSSNIEQQNSTRIRQNTRDHPSTANTVDRTNHQLENLEAETAPLP.

The Extracellular segment spans residues 1–69 (MDSSAVPANA…CPPTGSPSMI (69 aa)). Residues N9, N12, N34, N41, and N49 are each glycosylated (N-linked (GlcNAc...) asparagine). Residues 70–94 (TAITIMALYSIVCVVGLFGNFLVMY) traverse the membrane as a helical segment. Over 95–107 (VIVRYTKMKTATN) the chain is Cytoplasmic. Residues 108–132 (IYIFNLALADALATSTLPFQSVNYL) form a helical membrane-spanning segment. Residues 133–143 (MGTWPFGTILC) lie on the Extracellular side of the membrane. The cysteines at positions 143 and 220 are disulfide-linked. The helical transmembrane segment at 144–166 (KIVISIDYYNMFTSIFTLCTMSV) threads the bilayer. The Cytoplasmic portion of the chain corresponds to 167–186 (DRYIAVCHPVKALDFRTPRN). At Y169 the chain carries Phosphotyrosine. Residues 187–208 (AKIINVCNWILSSAIGLPVMFM) traverse the membrane as a helical segment. The Extracellular portion of the chain corresponds to 209 to 231 (ATTKYRHGSIDCTLTFSHPTWYW). The chain crosses the membrane as a helical span at residues 232 to 256 (ENLLKICVFIFAFIMPVLIITVCYG). Residues 257–280 (LMILRLKSVRMLSGSKEKDRNLRR) are Cytoplasmic-facing. A helical transmembrane segment spans residues 281–307 (ITRMVLVVVAVFIVCWTPIHIYVIIKA). Over 308 to 315 (LVTIPETT) the chain is Extracellular. Residues 316–339 (FQTVSWHFCIALGYTNSCLNPVLY) traverse the membrane as a helical segment. Positions 335–339 (NPVLY) match the NPxxY; plays a role in stabilizing the activated conformation of the receptor motif. The Cytoplasmic segment spans residues 340 to 401 (AFLDENFKRC…NLEAETAPLP (62 aa)). C354 is lipidated: S-palmitoyl cysteine. Residues 365–388 (NSTRIRQNTRDHPSTANTVDRTNH) form a disordered region. Position 366 is a phosphoserine (S366). A Phosphothreonine modification is found at T373. S378 carries the post-translational modification Phosphoserine. Position 397 is a phosphothreonine (T397).

This sequence belongs to the G-protein coupled receptor 1 family. Forms homooligomers and heterooligomers with other GPCRs, such as OPRD1, OPRK1, OPRL1, NPFFR2, ADRA2A, SSTR2, CNR1 and CCR5 (probably in dimeric forms). Interacts with heterotrimeric G proteins; interaction with a heterotrimeric complex containing GNAI1, GNB1 and GNG2 stabilizes the active conformation of the receptor and increases its affinity for endomorphin-2, the synthetic opioid peptide DAMGO and for morphinan agonists. Interacts with PPL; the interaction disrupts agonist-mediated G-protein activation. Interacts (via C-terminus) with DNAJB4 (via C-terminus). Interacts with calmodulin; the interaction inhibits the constitutive activity of OPRM1; it abolishes basal and attenuates agonist-stimulated G-protein coupling. Interacts with FLNA, PLD2, RANBP9 and WLS and GPM6A. Interacts with RTP4. Interacts with SYP and GNAS. Interacts with RGS9, RGS17, RGS20, RGS4, PPP1R9B and HINT1. Post-translationally, phosphorylated. Differentially phosphorylated in basal and agonist-induced conditions. Agonist-mediated phosphorylation modulates receptor internalization. Phosphorylated by GRK2 in a agonist-dependent manner. Phosphorylation at Tyr-169 requires receptor activation, is dependent on non-receptor protein tyrosine kinase Src and results in a decrease in agonist efficacy by reducing G-protein coupling efficiency. Phosphorylated on tyrosine residues; the phosphorylation is involved in agonist-induced G-protein-independent receptor down-regulation. Phosphorylation at Ser-378 is involved in G-protein-dependent but not beta-arrestin-dependent activation of the ERK pathway. Ubiquitinated. A basal ubiquitination seems not to be related to degradation. Ubiquitination is increased upon formation of OPRM1:OPRD1 oligomers leading to proteasomal degradation; the ubiquitination is diminished by RTP4.

The protein localises to the cell membrane. Its subcellular location is the cell projection. The protein resides in the axon. It is found in the perikaryon. It localises to the dendrite. The protein localises to the endosome. In terms of biological role, receptor for endogenous opioids such as beta-endorphin and endomorphin. Receptor for natural and synthetic opioids including morphine, heroin, DAMGO, fentanyl, etorphine, buprenorphin and methadone. Also activated by enkephalin peptides, such as Met-enkephalin or Met-enkephalin-Arg-Phe, with higher affinity for Met-enkephalin-Arg-Phe. Agonist binding to the receptor induces coupling to an inactive GDP-bound heterotrimeric G-protein complex and subsequent exchange of GDP for GTP in the G-protein alpha subunit leading to dissociation of the G-protein complex with the free GTP-bound G-protein alpha and the G-protein beta-gamma dimer activating downstream cellular effectors. The agonist- and cell type-specific activity is predominantly coupled to pertussis toxin-sensitive G(i) and G(o) G alpha proteins, GNAI1, GNAI2, GNAI3 and GNAO1, and to a lesser extent to pertussis toxin-insensitive G alpha proteins GNAZ and GNA15. They mediate an array of downstream cellular responses, including inhibition of adenylate cyclase activity and both N-type and L-type calcium channels, activation of inward rectifying potassium channels, mitogen-activated protein kinase (MAPK), phospholipase C (PLC), phosphoinositide/protein kinase (PKC), phosphoinositide 3-kinase (PI3K) and regulation of NF-kappa-B. Also couples to adenylate cyclase stimulatory G alpha proteins. The selective temporal coupling to G-proteins and subsequent signaling can be regulated by RGSZ proteins, such as RGS9, RGS17 and RGS4. Phosphorylation by members of the GPRK subfamily of Ser/Thr protein kinases and association with beta-arrestins is involved in short-term receptor desensitization. Beta-arrestins associate with the GPRK-phosphorylated receptor and uncouple it from the G-protein thus terminating signal transduction. The phosphorylated receptor is internalized through endocytosis via clathrin-coated pits which involves beta-arrestins. The activation of the ERK pathway occurs either in a G-protein-dependent or a beta-arrestin-dependent manner and is regulated by agonist-specific receptor phosphorylation. Acts as a class A G-protein coupled receptor (GPCR) which dissociates from beta-arrestin at or near the plasma membrane and undergoes rapid recycling. Receptor down-regulation pathways are varying with the agonist and occur dependent or independent of G-protein coupling. Endogenous ligands induce rapid desensitization, endocytosis and recycling. Heterooligomerization with other GPCRs can modulate agonist binding, signaling and trafficking properties. Involved in neurogenesis. In Pan troglodytes (Chimpanzee), this protein is Mu-type opioid receptor (OPRM1).